Consider the following 485-residue polypeptide: Ribulose bisphosphate carboxylase large chain (485 aa).

The propeptide occupies 1-2 (MS). Position 3 is an N-acetylproline (Pro3). Lys14 bears the N6,N6,N6-trimethyllysine mark. Positions 123 and 173 each coordinate substrate. Lys175 functions as the Proton acceptor in the catalytic mechanism. Lys177 lines the substrate pocket. Residues Lys201, Asp203, and Glu204 each contribute to the Mg(2+) site. N6-carboxylysine is present on Lys201. The Proton acceptor role is filled by His294. 3 residues coordinate substrate: Arg295, His327, and Ser379.

Belongs to the RuBisCO large chain family. Type I subfamily. In terms of assembly, heterohexadecamer of 8 large chains and 8 small chains; disulfide-linked. The disulfide link is formed within the large subunit homodimers. Requires Mg(2+) as cofactor. In terms of processing, the disulfide bond which can form in the large chain dimeric partners within the hexadecamer appears to be associated with oxidative stress and protein turnover.

It localises to the plastid. The protein resides in the chloroplast. The enzyme catalyses 2 (2R)-3-phosphoglycerate + 2 H(+) = D-ribulose 1,5-bisphosphate + CO2 + H2O. The catalysed reaction is D-ribulose 1,5-bisphosphate + O2 = 2-phosphoglycolate + (2R)-3-phosphoglycerate + 2 H(+). Functionally, ruBisCO catalyzes two reactions: the carboxylation of D-ribulose 1,5-bisphosphate, the primary event in carbon dioxide fixation, as well as the oxidative fragmentation of the pentose substrate in the photorespiration process. Both reactions occur simultaneously and in competition at the same active site. In Flaveria bidentis (Coastal plain yellowtops), this protein is Ribulose bisphosphate carboxylase large chain.